The chain runs to 276 residues: 4-deoxy-L-threo-5-hexosulose-uronate ketol-isomerase (276 aa).

Zn(2+) is bound by residues H194, H196, E201, and H243.

This sequence belongs to the KduI family. Zn(2+) is required as a cofactor.

It catalyses the reaction 5-dehydro-4-deoxy-D-glucuronate = 3-deoxy-D-glycero-2,5-hexodiulosonate. It functions in the pathway glycan metabolism; pectin degradation; 2-dehydro-3-deoxy-D-gluconate from pectin: step 4/5. Catalyzes the isomerization of 5-dehydro-4-deoxy-D-glucuronate to 3-deoxy-D-glycero-2,5-hexodiulosonate. This is 4-deoxy-L-threo-5-hexosulose-uronate ketol-isomerase from Halalkalibacterium halodurans (strain ATCC BAA-125 / DSM 18197 / FERM 7344 / JCM 9153 / C-125) (Bacillus halodurans).